We begin with the raw amino-acid sequence, 354 residues long: Diaminopimelate epimerase, chloroplastic (354 aa).

The transit peptide at 1–44 directs the protein to the chloroplast; sequence MSSATAAATATIAAAAAKLAATPAPAPSRRRLTLRGNPTARRCV. Catalysis depends on residues cysteine 142 and cysteine 297.

Belongs to the diaminopimelate epimerase family.

The protein localises to the plastid. It is found in the chloroplast. It carries out the reaction (2S,6S)-2,6-diaminopimelate = meso-2,6-diaminopimelate. It participates in amino-acid biosynthesis; L-lysine biosynthesis via DAP pathway; DL-2,6-diaminopimelate from LL-2,6-diaminopimelate: step 1/1. In Oryza sativa subsp. japonica (Rice), this protein is Diaminopimelate epimerase, chloroplastic (DAPF).